The following is a 206-amino-acid chain: High frequency lysogenization protein HflD homolog (206 aa).

It belongs to the HflD family.

The protein localises to the cytoplasm. The protein resides in the cell inner membrane. The sequence is that of High frequency lysogenization protein HflD homolog from Marinobacter nauticus (strain ATCC 700491 / DSM 11845 / VT8) (Marinobacter aquaeolei).